The sequence spans 309 residues: Sulfate adenylyltransferase subunit 2 (309 aa).

Belongs to the PAPS reductase family. CysD subfamily. As to quaternary structure, heterodimer composed of CysD, the smaller subunit, and CysN.

The catalysed reaction is sulfate + ATP + H(+) = adenosine 5'-phosphosulfate + diphosphate. The protein operates within sulfur metabolism; hydrogen sulfide biosynthesis; sulfite from sulfate: step 1/3. With CysN forms the ATP sulfurylase (ATPS) that catalyzes the adenylation of sulfate producing adenosine 5'-phosphosulfate (APS) and diphosphate, the first enzymatic step in sulfur assimilation pathway. APS synthesis involves the formation of a high-energy phosphoric-sulfuric acid anhydride bond driven by GTP hydrolysis by CysN coupled to ATP hydrolysis by CysD. The protein is Sulfate adenylyltransferase subunit 2 of Methylorubrum extorquens (strain CM4 / NCIMB 13688) (Methylobacterium extorquens).